The chain runs to 656 residues: MASNKILGIDLGTTNSAFAVMEGGDPEIIVNSEGERTTPSVVAFTDDGERLVGKPAKNQAVQNPEDTIQSIKRHMGEDDYTVEVGDDEYTPEQISAMILQKIKRDAEEYLGDDIEKAVITVPAYFNDRQRQATKDAGEIAGFEVERIVNEPTAAAMAYGLDDESDQTVLVYDLGGGTFDVSILDLGGGVYEVVATNGDNDLGGDDWDEAIIDYLADSFEEEHGIDLREDRQALQRLHEAAEEAKIELSSRKETNINLPFIAATDEGPLNLEESISRAKFESLTSDLVERTVGPTEQALDDAGYSKGDIDEVILVGGSTRMPMVQEKVEELTGQEPKKNVNPDEAVGLGAAIQGGVLSGDVDDIVLLDVTPLSLGIEVKGGLFERLIDKNTTIPTEASKVFTTAADNQTSVNIRVFQGEREIAEENELLGAFQLTGIPPAPAGTPQIEVTFNIDENGIVNVEAEDQGSGNKEDITIEGGVGLSDEEIEEMQEEAEKHAEEDEKRRERIEARNEAESTLQRAETLLDENEDAVDDDLRADIEASMDDLREVVEDEDADTDELTEATEALAEALQEIGKQMYQQQAGEGGAGAGAGAAGGMGGAGPGGMGGAGPGGMGGAGPGGMGGAGPGAGAGQQGDGEEFVDADFEDVDDEDDEDE.

Disordered stretches follow at residues 488 to 532 (EMQE…DAVD) and 579 to 656 (YQQQ…DEDE). A compositionally biased stretch (basic and acidic residues) spans 492–513 (EAEKHAEEDEKRRERIEARNEA). Residues 523 to 532 (LLDENEDAVD) show a composition bias toward acidic residues. Residues 584 to 635 (GEGGAGAGAGAAGGMGGAGPGGMGGAGPGGMGGAGPGGMGGAGPGAGAGQQG) are compositionally biased toward gly residues. The segment covering 636–656 (DGEEFVDADFEDVDDEDDEDE) has biased composition (acidic residues).

Belongs to the heat shock protein 70 family.

In terms of biological role, acts as a chaperone. This is Chaperone protein DnaK from Natronomonas pharaonis (strain ATCC 35678 / DSM 2160 / CIP 103997 / JCM 8858 / NBRC 14720 / NCIMB 2260 / Gabara) (Halobacterium pharaonis).